Here is a 369-residue protein sequence, read N- to C-terminus: tRNA/tmRNA (uracil-C(5))-methyltransferase (369 aa).

The S-adenosyl-L-methionine site is built by Gln190, Tyr218, Asn223, Glu239, and Asp301. Catalysis depends on Cys326, which acts as the Nucleophile. Glu360 (proton acceptor) is an active-site residue.

It belongs to the class I-like SAM-binding methyltransferase superfamily. RNA M5U methyltransferase family. TrmA subfamily.

It carries out the reaction uridine(54) in tRNA + S-adenosyl-L-methionine = 5-methyluridine(54) in tRNA + S-adenosyl-L-homocysteine + H(+). It catalyses the reaction uridine(341) in tmRNA + S-adenosyl-L-methionine = 5-methyluridine(341) in tmRNA + S-adenosyl-L-homocysteine + H(+). Its function is as follows. Dual-specificity methyltransferase that catalyzes the formation of 5-methyluridine at position 54 (m5U54) in all tRNAs, and that of position 341 (m5U341) in tmRNA (transfer-mRNA). This Vibrio vulnificus (strain CMCP6) protein is tRNA/tmRNA (uracil-C(5))-methyltransferase.